Reading from the N-terminus, the 74-residue chain is uncharacterized protein (74 aa).

A helical membrane pass occupies residues 8–30 (LAAAVSSSAASAGVSRIAASAMA).

The protein resides in the mitochondrion outer membrane. This is an uncharacterized protein from Saccharomyces cerevisiae (strain ATCC 204508 / S288c) (Baker's yeast).